We begin with the raw amino-acid sequence, 489 residues long: Glycogen synthase (489 aa).

An ADP-alpha-D-glucose-binding site is contributed by Lys18.

It belongs to the glycosyltransferase 1 family. Bacterial/plant glycogen synthase subfamily.

The enzyme catalyses [(1-&gt;4)-alpha-D-glucosyl](n) + ADP-alpha-D-glucose = [(1-&gt;4)-alpha-D-glucosyl](n+1) + ADP + H(+). It participates in glycan biosynthesis; glycogen biosynthesis. Functionally, synthesizes alpha-1,4-glucan chains using ADP-glucose. The protein is Glycogen synthase of Rhodopseudomonas palustris (strain BisA53).